The sequence spans 345 residues: Anthranilate phosphoribosyltransferase (345 aa).

Residues 77 to 79 (TAG), 82 to 83 (GD), Thr87, 89 to 92 (NVST), 106 to 114 (KHGNRAVSG), and Ser118 contribute to the 5-phospho-alpha-D-ribose 1-diphosphate site. Gly79 serves as a coordination point for anthranilate. Ser91 is a binding site for Mg(2+). Asn109 contributes to the anthranilate binding site. Arg164 contributes to the anthranilate binding site. The Mg(2+) site is built by Asp223 and Glu224.

The protein belongs to the anthranilate phosphoribosyltransferase family. Homodimer. The cofactor is Mg(2+).

The catalysed reaction is N-(5-phospho-beta-D-ribosyl)anthranilate + diphosphate = 5-phospho-alpha-D-ribose 1-diphosphate + anthranilate. The protein operates within amino-acid biosynthesis; L-tryptophan biosynthesis; L-tryptophan from chorismate: step 2/5. Catalyzes the transfer of the phosphoribosyl group of 5-phosphorylribose-1-pyrophosphate (PRPP) to anthranilate to yield N-(5'-phosphoribosyl)-anthranilate (PRA). This is Anthranilate phosphoribosyltransferase from Saccharolobus solfataricus (strain ATCC 35092 / DSM 1617 / JCM 11322 / P2) (Sulfolobus solfataricus).